The chain runs to 118 residues: Ribonuclease P protein component (118 aa).

This sequence belongs to the RnpA family. Consists of a catalytic RNA component (M1 or rnpB) and a protein subunit.

It catalyses the reaction Endonucleolytic cleavage of RNA, removing 5'-extranucleotides from tRNA precursor.. Functionally, RNaseP catalyzes the removal of the 5'-leader sequence from pre-tRNA to produce the mature 5'-terminus. It can also cleave other RNA substrates such as 4.5S RNA. The protein component plays an auxiliary but essential role in vivo by binding to the 5'-leader sequence and broadening the substrate specificity of the ribozyme. In Shewanella frigidimarina (strain NCIMB 400), this protein is Ribonuclease P protein component.